Reading from the N-terminus, the 587-residue chain is Leucine-rich repeat-containing protein 63 (587 aa).

LRR repeat units follow at residues 251–274 (QSVI…IPPR), 344–367 (AFQL…ILCL), 368–390 (KNLQ…IQQL), 392–413 (FLRI…LFSL), 414–436 (SYLE…IQKL), 437–459 (RSLE…ILKL), and 487–510 (LTQI…IPVE).

This is Leucine-rich repeat-containing protein 63 (LRRC63) from Homo sapiens (Human).